A 1153-amino-acid chain; its full sequence is ATP-dependent helicase/deoxyribonuclease subunit B (1153 aa).

A UvrD-like helicase ATP-binding domain is found at 1–289 (MELNAYIGRA…KHLEQNFNAL (289 aa)). 8–15 (GRAGTGKS) lines the ATP pocket. One can recognise a UvrD-like helicase C-terminal domain in the interval 269-583 (LDVQRFIHND…SIGTMDLAKV (315 aa)). Residues cysteine 784, cysteine 1110, cysteine 1113, and cysteine 1119 each coordinate [4Fe-4S] cluster.

It belongs to the helicase family. AddB/RexB type 1 subfamily. Heterodimer of AddA and AddB. The cofactor is Mg(2+). [4Fe-4S] cluster serves as cofactor.

Functionally, the heterodimer acts as both an ATP-dependent DNA helicase and an ATP-dependent, dual-direction single-stranded exonuclease. Recognizes the chi site generating a DNA molecule suitable for the initiation of homologous recombination. The AddB subunit has 5' -&gt; 3' nuclease activity but not helicase activity. This chain is ATP-dependent helicase/deoxyribonuclease subunit B, found in Staphylococcus saprophyticus subsp. saprophyticus (strain ATCC 15305 / DSM 20229 / NCIMB 8711 / NCTC 7292 / S-41).